We begin with the raw amino-acid sequence, 411 residues long: MNLVLGLGLFLAGLLTVKGLLQDRDAPDTYESPVRVQEWRGKKDARELTRHNMEFGFKLLQRLASNSRQGNIFLSPLSISTAFSMLSLGAQNSTLEEIREGFNFKEMSDRDMHMGFHYLLQKLNRETQDVKMSIGNALFMDQRLRPQQRFLKLAKNLYDADMILTNFQDLENTQKNINKYISRKTHNRIENMVKNIDPGTVMLLTNYIYFQGRWQYEFDPKQTKEEDFFIEEGKTVKVPMMFQRGMYDMAYDSQLSCTILEMPYRGNITATFVLPDSGKLRLLEQGLQADIFAKWKSLLSKRVVDVWVPRLHISATYNMKKVLSRLGISKIFEEHGDLTRISSHRSLKVGEAVHKAELRMNEKGTEGAAGSGAQTLPMETPRRMKLNAPFLMMIYENLMPSMIFLARIYNP.

The signal sequence occupies residues Met-1–Leu-20. Residues Asn-92 and Asn-267 are each glycosylated (N-linked (GlcNAc...) asparagine). A reactive center loop region spans residues Gly-364 to Arg-382.

The protein belongs to the serpin family. In terms of assembly, forms a stable complex with KLK7. Post-translationally, glycosylation slightly decreases affinity for heparin, but otherwise has no significant effect on KLK7 inhibitory activity or thermal stability of the protein. In terms of tissue distribution, expressed in visceral adipose tissues.

Its subcellular location is the secreted. Its activity is regulated as follows. Inhibition of KLK7 is enhanced by heparin. Adipokine that modulates insulin action by specifically inhibiting its target protease KLK7 in white adipose tissues. This Rattus norvegicus (Rat) protein is Serpin A12 (Serpina12).